A 61-amino-acid polypeptide reads, in one-letter code: Small ribosomal subunit protein uS14 (61 aa).

Residues cysteine 24, cysteine 27, cysteine 40, and cysteine 43 each contribute to the Zn(2+) site.

It belongs to the universal ribosomal protein uS14 family. Zinc-binding uS14 subfamily. As to quaternary structure, part of the 30S ribosomal subunit. Contacts proteins S3 and S10. It depends on Zn(2+) as a cofactor.

Binds 16S rRNA, required for the assembly of 30S particles and may also be responsible for determining the conformation of the 16S rRNA at the A site. In Ruminiclostridium cellulolyticum (strain ATCC 35319 / DSM 5812 / JCM 6584 / H10) (Clostridium cellulolyticum), this protein is Small ribosomal subunit protein uS14.